Reading from the N-terminus, the 2205-residue chain is Genome polyprotein (2205 aa).

G2 carries the N-myristoyl glycine; by host lipid modification. At 2-1518 the chain is on the cytoplasmic side; it reads GAQVSSQKVG…NINRAMTILQ (1517 aa). The segment at 579–599 is amphipathic alpha-helix; that stretch reads GLGDLIEGVVEGVTRNALTPL. Polar residues predominate over residues 598–613; it reads PLTPVNNLPDTRSSGP. A disordered region spans residues 598 to 619; it reads PLTPVNNLPDTRSSGPAHSKET. Catalysis depends on for protease 2A activity residues H899 and D917. Zn(2+) contacts are provided by C934 and C936. C988 acts as the For protease 2A activity in catalysis. Positions 994 and 996 each coordinate Zn(2+). Residues 1126–1198 are membrane-binding; that stretch reads GDSWLKKFTE…HQSCPSQEHQ (73 aa). The interval 1126 to 1264 is oligomerization; it reads GDSWLKKFTE…SPGTGKSVAT (139 aa). The segment at 1147–1151 is RNA-binding; sequence SNKIS. The region spanning 1230-1386 is the SF3 helicase domain; the sequence is EHTINNYVQF…SEYSRDGKLN (157 aa). 1254–1261 serves as a coordination point for ATP; sequence GSPGTGKS. Residues C1394, C1397, C1406, and C1411 each coordinate Zn(2+). The C4-type zinc finger occupies 1394-1411; the sequence is CKNCHQPANFKRCCPLVC. The segment at 1438-1445 is RNA-binding; that stretch reads ERNRRSSI. The segment at 1449–1454 is oligomerization; sequence MEALFQ. Residues 1519–1534 lie within the membrane without spanning it; that stretch reads AVTTFAAVAGVVYVMY. The Cytoplasmic segment spans residues 1535-2205; sequence KLFAGHQGAY…TLYRRWLDSF (671 aa). Y1544 is subject to O-(5'-phospho-RNA)-tyrosine. The Peptidase C3 domain maps to 1564-1742; that stretch reads GPGFDYAVAM…FAAALKRSYF (179 aa). Residues H1603, E1634, and C1710 each act as for protease 3C activity in the active site. One can recognise a RdRp catalytic domain in the interval 1971–2086; it reads MEEKLFDYTG…SYPHEVDASL (116 aa). The Mg(2+) site is built by D1977 and D2072.

Belongs to the picornaviruses polyprotein family. As to quaternary structure, interacts with capsid protein VP1 and capsid protein VP3 to form heterotrimeric protomers. Interacts with capsid protein VP0, and capsid protein VP3 to form heterotrimeric protomers. Interacts with human PVR. Five protomers subsequently associate to form pentamers which serve as building blocks for the capsid. Interacts with capsid protein VP2, capsid protein VP3 and capsid protein VP4 following cleavage of capsid protein VP0. In terms of assembly, interacts with capsid protein VP1 and capsid protein VP3 in the mature capsid. As to quaternary structure, interacts with capsid protein VP0 and capsid protein VP1 to form heterotrimeric protomers. Five protomers subsequently associate to form pentamers which serve as building blocks for the capsid. Interacts with capsid protein VP4 in the mature capsid. Interacts with protein 2C; this interaction may be important for virion morphogenesis. Interacts with capsid protein VP1 and capsid protein VP3. In terms of assembly, homodimer. As to quaternary structure, homohexamer; forms a hexameric ring structure with 6-fold symmetry characteristic of AAA+ ATPases. Interacts (via N-terminus) with host RTN3 (via reticulon domain); this interaction is important for viral replication. Interacts with capsid protein VP3; this interaction may be important for virion morphogenesis. Interacts with protein 3CD. In terms of assembly, homodimer. Interacts with host GBF1. Interacts (via GOLD domain) with host ACBD3 (via GOLD domain); this interaction allows the formation of a viral protein 3A/ACBD3 heterotetramer with a 2:2 stoichiometry, which will stimulate the recruitment of host PI4KB in order to synthesize PI4P at the viral RNA replication sites. As to quaternary structure, interacts with RNA-directed RNA polymerase. Interacts with protein 3AB and with RNA-directed RNA polymerase. In terms of assembly, interacts with Viral protein genome-linked and with protein 3CD. The cofactor is Mg(2+). In terms of processing, specific enzymatic cleavages in vivo by the viral proteases yield processing intermediates and the mature proteins. Post-translationally, myristoylation is required for the formation of pentamers during virus assembly. Further assembly of 12 pentamers and a molecule of genomic RNA generates the provirion. During virion maturation, immature virions are rendered infectious following cleavage of VP0 into VP4 and VP2. This maturation seems to be an autocatalytic event triggered by the presence of RNA in the capsid and it is followed by a conformational change infectious virion. In terms of processing, myristoylation is required during RNA encapsidation and formation of the mature virus particle. Post-translationally, VPg is uridylylated by the polymerase into VPg-pUpU. This acts as a nucleotide-peptide primer for the genomic RNA replication.

It is found in the virion. Its subcellular location is the host cytoplasm. It localises to the host cytoplasmic vesicle membrane. The protein localises to the host nucleus. It carries out the reaction a ribonucleoside 5'-triphosphate + H2O = a ribonucleoside 5'-diphosphate + phosphate + H(+). It catalyses the reaction Selective cleavage of Tyr-|-Gly bond in the picornavirus polyprotein.. The enzyme catalyses RNA(n) + a ribonucleoside 5'-triphosphate = RNA(n+1) + diphosphate. The catalysed reaction is Selective cleavage of Gln-|-Gly bond in the poliovirus polyprotein. In other picornavirus reactions Glu may be substituted for Gln, and Ser or Thr for Gly.. Replication or transcription is subject to high level of random mutations by the nucleotide analog ribavirin. Its function is as follows. Forms an icosahedral capsid of pseudo T=3 symmetry with capsid proteins VP2 and VP3. The capsid is 300 Angstroms in diameter, composed of 60 copies of each capsid protein and enclosing the viral positive strand RNA genome. Capsid protein VP1 mainly forms the vertices of the capsid. Capsid protein VP1 interacts with host cell receptor PVR to provide virion attachment to target host cells. This attachment induces virion internalization predominantly through clathrin- and caveolin-independent endocytosis in Hela cells and through caveolin-mediated endocytosis in brain microvascular endothelial cells. Tyrosine kinases are probably involved in the entry process. Virus binding to PVR induces increased junctional permeability and rearrangement of junctional proteins. Modulation of endothelial tight junctions, as well as cytolytic infection of endothelial cells themselves, may result in loss of endothelial integrity which may help the virus to reach the CNS. After binding to its receptor, the capsid undergoes conformational changes. Capsid protein VP1 N-terminus (that contains an amphipathic alpha-helix) and capsid protein VP4 are externalized. Together, they shape a pore in the host membrane through which viral genome is translocated to host cell cytoplasm. Forms an icosahedral capsid of pseudo T=3 symmetry with capsid proteins VP2 and VP3. The capsid is 300 Angstroms in diameter, composed of 60 copies of each capsid protein and enclosing the viral positive strand RNA genome. Functionally, lies on the inner surface of the capsid shell. After binding to the host receptor, the capsid undergoes conformational changes. Capsid protein VP4 is released, Capsid protein VP1 N-terminus is externalized, and together, they shape a pore in the host membrane through which the viral genome is translocated into the host cell cytoplasm. In terms of biological role, component of immature procapsids, which is cleaved into capsid proteins VP4 and VP2 after maturation. Allows the capsid to remain inactive before the maturation step. Its function is as follows. Cysteine protease that cleaves viral polyprotein and specific host proteins. It is responsible for the autocatalytic cleavage between the P1 and P2 regions, which is the first cleavage occurring in the polyprotein. Also cleaves the host translation initiation factor EIF4G1, in order to shut down the capped cellular mRNA translation. Inhibits the host nucleus-cytoplasm protein and RNA trafficking by cleaving host members of the nuclear pores including NUP98, NUP62 and NUP153. Counteracts stress granule formation probably by antagonizing its assembly or promoting its dissassembly. Cleaves and inhibits host IFIH1/MDA5, thereby inhibiting the type-I IFN production and the establishment of the antiviral state. Cleaves and inhibits host MAVS, thereby inhibiting the type-I IFN production and the establishment of the antiviral state. Plays an essential role in the virus replication cycle by acting as a viroporin. Creates a pore in the host endoplasmic reticulum and as a consequence releases Ca2+ in the cytoplasm of infected cell. In turn, high levels of cytoplasmic calcium may trigger membrane trafficking and transport of viral ER-associated proteins to viroplasms, sites of viral genome replication. Functionally, induces and associates with structural rearrangements of intracellular membranes. Displays RNA-binding, nucleotide binding and NTPase activities. May play a role in virion morphogenesis and viral RNA encapsidation by interacting with the capsid protein VP3. In terms of biological role, localizes the viral replication complex to the surface of membranous vesicles. Together with protein 3CD binds the Cis-Active RNA Element (CRE) which is involved in RNA synthesis initiation. Acts as a cofactor to stimulate the activity of 3D polymerase, maybe through a nucleid acid chaperone activity. Its function is as follows. Localizes the viral replication complex to the surface of membranous vesicles. It inhibits host cell endoplasmic reticulum-to-Golgi apparatus transport and causes the disassembly of the Golgi complex, possibly through GBF1 interaction. This would result in depletion of MHC, trail receptors and IFN receptors at the host cell surface. Plays an essential role in viral RNA replication by recruiting ACBD3 and PI4KB at the viral replication sites, thereby allowing the formation of the rearranged membranous structures where viral replication takes place. Acts as a primer for viral RNA replication and remains covalently bound to viral genomic RNA. VPg is uridylylated prior to priming replication into VPg-pUpU. The oriI viral genomic sequence may act as a template for this. The VPg-pUpU is then used as primer on the genomic RNA poly(A) by the RNA-dependent RNA polymerase to replicate the viral genome. During genome replication, the VPg-RNA linkage is removed by the host TDP2, thereby accelerating replication. During the late stage of the replication cycle, host TDP2 is excluded from sites of viral RNA synthesis and encapsidation, allowing for the generation of progeny virions. Functionally, involved in the viral replication complex and viral polypeptide maturation. It exhibits protease activity with a specificity and catalytic efficiency that is different from protease 3C. Protein 3CD lacks polymerase activity. Protein 3CD binds to the 5'UTR of the viral genome. In terms of biological role, major viral protease that mediates proteolytic processing of the polyprotein. Cleaves host EIF5B, contributing to host translation shutoff. Also cleaves host PABPC1, contributing to host translation shutoff. Cleaves host RIGI and thus contributes to the inhibition of type I interferon production. Cleaves host NLRP1, triggers host N-glycine-mediated degradation of the autoinhibitory NLRP1 N-terminal fragment. Inhibits the integrated stress response (ISR) in the infected cell by cleaving host G3BP1. Stress granule formation is thus inhibited, which allows protein synthesis and viral replication. Its function is as follows. Replicates the viral genomic RNA on the surface of intracellular membranes. May form linear arrays of subunits that propagate along a strong head-to-tail interaction called interface-I. Covalently attaches UMP to a tyrosine of VPg, which is used to prime RNA synthesis. The positive stranded RNA genome is first replicated at virus induced membranous vesicles, creating a dsRNA genomic replication form. This dsRNA is then used as template to synthesize positive stranded RNA genomes. ss(+)RNA genomes are either translated, replicated or encapsidated. The sequence is that of Genome polyprotein from Homo sapiens (Human).